We begin with the raw amino-acid sequence, 323 residues long: Cyclin-H (323 aa).

Position 5 is a phosphoserine; by CDK8 (S5). S132 is subject to Phosphoserine. The segment at 296-323 (GYEDDDYVSKKPKQEEEEWTDDDLVDAL) is disordered. A Phosphoserine; by CDK8 modification is found at S304. A compositionally biased stretch (acidic residues) spans 310–323 (EEEEWTDDDLVDAL). Residue T315 is modified to Phosphothreonine.

This sequence belongs to the cyclin family. Cyclin C subfamily. As to quaternary structure, associates primarily with CDK7 and MAT1 to form the CAK complex. CAK can further associate with the core-TFIIH to form the TFIIH basal transcription factor.

Its subcellular location is the nucleus. Functionally, regulates CDK7, the catalytic subunit of the CDK-activating kinase (CAK) enzymatic complex. CAK activates the cyclin-associated kinases CDK1, CDK2, CDK4 and CDK6 by threonine phosphorylation. CAK complexed to the core-TFIIH basal transcription factor activates RNA polymerase II by serine phosphorylation of the repetitive C-terminal domain (CTD) of its large subunit (POLR2A), allowing its escape from the promoter and elongation of the transcripts. Involved in cell cycle control and in RNA transcription by RNA polymerase II. Its expression and activity are constant throughout the cell cycle. The protein is Cyclin-H (Ccnh) of Rattus norvegicus (Rat).